The primary structure comprises 510 residues: Ribose import ATP-binding protein RbsA 1 (510 aa).

ABC transporter domains are found at residues 20 to 256 (LEMR…VGRD) and 266 to 510 (VTLG…TGNA). 52-59 (GENGAGKS) lines the ATP pocket.

Belongs to the ABC transporter superfamily. Ribose importer (TC 3.A.1.2.1) family. As to quaternary structure, the complex is composed of an ATP-binding protein (RbsA), two transmembrane proteins (RbsC) and a solute-binding protein (RbsB).

The protein resides in the cell inner membrane. It carries out the reaction D-ribose(out) + ATP + H2O = D-ribose(in) + ADP + phosphate + H(+). Functionally, part of the ABC transporter complex RbsABC involved in ribose import. Responsible for energy coupling to the transport system. The polypeptide is Ribose import ATP-binding protein RbsA 1 (Agrobacterium fabrum (strain C58 / ATCC 33970) (Agrobacterium tumefaciens (strain C58))).